We begin with the raw amino-acid sequence, 270 residues long: Mediator of RNA polymerase II transcription subunit 4 (270 aa).

A disordered region spans residues 1 to 22 (MAASSSGEKEKERLGGGLGVAG). A2 bears the N-acetylalanine mark. Coiled-coil stretches lie at residues 24–48 (NSTRERLLSALEDLEVLSRELIEML) and 90–131 (HHEM…AKEK). S32 bears the Phosphoserine mark. The tract at residues 226-270 (DMSMNMLPPNHSSDFLLEPPGHNKENEDDVEIMSTDSSSSSSESD) is disordered. A compositionally biased stretch (low complexity) spans 259-270 (STDSSSSSSESD).

Belongs to the Mediator complex subunit 4 family. In terms of assembly, component of the Mediator complex, which is composed of MED1, MED4, MED6, MED7, MED8, MED9, MED10, MED11, MED12, MED13, MED13L, MED14, MED15, MED16, MED17, MED18, MED19, MED20, MED21, MED22, MED23, MED24, MED25, MED26, MED27, MED29, MED30, MED31, CCNC, CDK8 and CDC2L6/CDK11. The MED12, MED13, CCNC and CDK8 subunits form a distinct module termed the CDK8 module. Mediator containing the CDK8 module is less active than Mediator lacking this module in supporting transcriptional activation. Individual preparations of the Mediator complex lacking one or more distinct subunits have been variously termed ARC, CRSP, DRIP, PC2, SMCC and TRAP.

The protein localises to the nucleus. Functionally, component of the Mediator complex, a coactivator involved in the regulated transcription of nearly all RNA polymerase II-dependent genes. Mediator functions as a bridge to convey information from gene-specific regulatory proteins to the basal RNA polymerase II transcription machinery. Mediator is recruited to promoters by direct interactions with regulatory proteins and serves as a scaffold for the assembly of a functional preinitiation complex with RNA polymerase II and the general transcription factors. The protein is Mediator of RNA polymerase II transcription subunit 4 (MED4) of Homo sapiens (Human).